The following is a 193-amino-acid chain: SCO1 protein homolog (193 aa).

The first 18 residues, methionine 1 to alanine 18, serve as a signal peptide directing secretion. Cysteine 19 carries the N-palmitoyl cysteine lipid modification. A lipid anchor (S-diacylglycerol cysteine) is attached at cysteine 19. The Thioredoxin domain maps to aspartate 26–threonine 191. The Cu cation site is built by cysteine 64, cysteine 68, and histidine 154.

The protein belongs to the SCO1/2 family. As to quaternary structure, monomer.

It is found in the cell membrane. Necessary for insertion of copper into the active site of cytochrome c oxidase. May play a role in copper homeostasis or redox signaling. The protein is SCO1 protein homolog (ypmQ) of Bacillus subtilis (strain 168).